Consider the following 289-residue polypeptide: MQPPKTHNHIELAFEIDSDLYELYIAVLSQEGIEYFLEEDKKLLAYLPESEWNAEKEESIKTLLRETFGSAPHFTASFMADRNWNAEWEAHLQPVEISNRFLIIQHQKEYDVKPDQIVIAINPKMSFGTGYHATTRLMLRQMEELDLADKKIMDIGTGTGVLAIAARKLGNRNPILAFDNNAWAAENAVENVAENDVADIQVELLDAEEEMVANLKEGYDLILANINKNVLDRILPVIRRHAPNAQVLLSGVLVYDEPWLKKLLKRIDYTNVKTIYEDEWLSALIEPKN.

S-adenosyl-L-methionine-binding residues include T135, G156, D179, and N225.

This sequence belongs to the methyltransferase superfamily. PrmA family.

The protein resides in the cytoplasm. It carries out the reaction L-lysyl-[protein] + 3 S-adenosyl-L-methionine = N(6),N(6),N(6)-trimethyl-L-lysyl-[protein] + 3 S-adenosyl-L-homocysteine + 3 H(+). Its function is as follows. Methylates ribosomal protein L11. This chain is Ribosomal protein L11 methyltransferase, found in Chlorobaculum parvum (strain DSM 263 / NCIMB 8327) (Chlorobium vibrioforme subsp. thiosulfatophilum).